We begin with the raw amino-acid sequence, 406 residues long: Dematin (406 aa).

Disordered stretches follow at residues 1–30 (MERLQKQPLTSPGSVSSSRDSSVPGSPSSI) and 78–333 (LPRS…DRGN). The segment covering 11–29 (SPGSVSSSRDSSVPGSPSS) has biased composition (low complexity). Phosphoserine occurs at positions 16, 18, 26, 92, 96, 105, 110, 113, 157, and 227. The span at 105–114 (SPGTISQASA) shows a compositional bias: polar residues. Acidic residues predominate over residues 217-228 (EEEEEEEDDDSG). The segment at 225 to 309 (DDSGEEMKAL…SRLQSTDFSP (85 aa)) is interaction with RASGRF2. Composition is skewed to basic and acidic residues over residues 229–243 (EEMKALRERQREELS) and 253–262 (ILKEEMEKSL). Phosphoserine is present on residues S270, S280, S290, S304, S316, S334, S373, and S384. Polar residues predominate over residues 282–323 (HAGTSKSSSLPAYGRTTLSRLQSTDFSPSGSEAESPGLQNGE). In terms of domain architecture, HP spans 338–406 (VLEQKIYPYE…NELKKKASLF (69 aa)). Phosphoserine; by PKA is present on S404.

Belongs to the villin/gelsolin family. Monomeric; under reducing conditions. Self-associates. Exists under oxidizing condition as a trimer linked by disulfide bonds. Found in a complex with DMTN, F-actin and spectrin. Found in a complex with ADD2, DMTN and SLC2A1. Interacts with F-actin, ITPKB and spectrin. Interacts with SLC2A1 (via C-terminus cytoplasmic region). Interacts with RASGRF2. In terms of processing, phosphorylated. Phosphorylation at Ser-404 by PKA causes the C-terminal headpiece domain to associate with the N-terminal core domain, and leads to the inhibition of its actin bundling activity.

The protein resides in the cytoplasm. The protein localises to the cytosol. It is found in the perinuclear region. It localises to the cytoskeleton. Its subcellular location is the cell membrane. The protein resides in the membrane. The protein localises to the endomembrane system. It is found in the cell projection. Functionally, membrane-cytoskeleton-associated protein with F-actin-binding activity that induces F-actin bundles formation and stabilization. Its F-actin-bundling activity is reversibly regulated upon its phosphorylation by the cAMP-dependent protein kinase A (PKA). Binds to the erythrocyte membrane glucose transporter-1 SLC2A1/GLUT1, and hence stabilizes and attaches the spectrin-actin network to the erythrocytic plasma membrane. Plays a role in maintaining the functional integrity of PKA-activated erythrocyte shape and the membrane mechanical properties. Also plays a role as a modulator of actin dynamics in fibroblasts; acts as a negative regulator of the RhoA activation pathway. In platelets, functions as a regulator of internal calcium mobilization across the dense tubular system that affects platelet granule secretion pathways and aggregation. Also required for the formation of a diverse set of cell protrusions, such as filopodia and lamellipodia, necessary for platelet cell spreading, motility and migration. Acts as a tumor suppressor and inhibits malignant cell transformation. The polypeptide is Dematin (DMTN) (Bos taurus (Bovine)).